The primary structure comprises 243 residues: Transmembrane protein 174 (243 aa).

2 helical membrane passes run 40-60 (LLFSGIFLGLVGITFTVMGWI) and 73-93 (LLGPVLLSVGVTFILIAVCKF).

Interacts with SLC34A1; regulates SLC34A1 internalization by PTH and FGF23. In terms of tissue distribution, predominantly expressed in kidney. Selectively localized in the apical membrane of renal proximal tubule epithelial cells.

Its subcellular location is the endoplasmic reticulum membrane. It localises to the apical cell membrane. Regulator of plasma phosphate homeostasis. Decreases serum inorganic phosphate (Pi) uptake by regulating the sodium-phosphate cotransporter SLC34A1 trafficking by PTH and FGF23 in the kidney. This is Transmembrane protein 174 (TMEM174) from Homo sapiens (Human).